A 66-amino-acid chain; its full sequence is Dermaseptin PD-3-7 (66 aa).

Residues 1 to 22 form the signal peptide; that stretch reads MSFMKKSLLLVLFLGVVSLSNC. A propeptide spanning residues 23–40 is cleaved from the precursor; it reads EEEKGENENEDHEEHHEE.

Expressed by the skin glands.

The protein resides in the secreted. In terms of biological role, possesses a potent antimicrobial activity against Gram-positive and Gram-negative bacteria. Probably acts by disturbing membrane functions with its amphipathic structure. This Agalychnis dacnicolor (Giant Mexican leaf frog) protein is Dermaseptin PD-3-7.